The primary structure comprises 267 residues: Hydroxyethylthiazole kinase 2 (267 aa).

Substrate is bound at residue Met41. Residues Lys116 and Thr166 each coordinate ATP. A substrate-binding site is contributed by Gly193.

This sequence belongs to the Thz kinase family. Requires Mg(2+) as cofactor.

The enzyme catalyses 5-(2-hydroxyethyl)-4-methylthiazole + ATP = 4-methyl-5-(2-phosphooxyethyl)-thiazole + ADP + H(+). Its pathway is cofactor biosynthesis; thiamine diphosphate biosynthesis; 4-methyl-5-(2-phosphoethyl)-thiazole from 5-(2-hydroxyethyl)-4-methylthiazole: step 1/1. Its function is as follows. Catalyzes the phosphorylation of the hydroxyl group of 4-methyl-5-beta-hydroxyethylthiazole (THZ). In Streptococcus pneumoniae (strain Hungary19A-6), this protein is Hydroxyethylthiazole kinase 2.